The following is a 412-amino-acid chain: CCA-adding enzyme (412 aa).

Residues Ser-41 and Lys-44 each contribute to the ATP site. CTP is bound by residues Ser-41 and Lys-44. 3 residues coordinate Mg(2+): Asp-53, Asp-55, and Asp-106. ATP-binding residues include His-129, Lys-149, and Tyr-158. CTP contacts are provided by His-129, Lys-149, and Tyr-158.

Belongs to the tRNA nucleotidyltransferase/poly(A) polymerase family. Archaeal CCA-adding enzyme subfamily. In terms of assembly, homodimer. Mg(2+) is required as a cofactor.

The catalysed reaction is a tRNA precursor + 2 CTP + ATP = a tRNA with a 3' CCA end + 3 diphosphate. It carries out the reaction a tRNA with a 3' CCA end + 2 CTP + ATP = a tRNA with a 3' CCACCA end + 3 diphosphate. Functionally, catalyzes the addition and repair of the essential 3'-terminal CCA sequence in tRNAs without using a nucleic acid template. Adds these three nucleotides in the order of C, C, and A to the tRNA nucleotide-73, using CTP and ATP as substrates and producing inorganic pyrophosphate. tRNA 3'-terminal CCA addition is required both for tRNA processing and repair. Also involved in tRNA surveillance by mediating tandem CCA addition to generate a CCACCA at the 3' terminus of unstable tRNAs. While stable tRNAs receive only 3'-terminal CCA, unstable tRNAs are marked with CCACCA and rapidly degraded. The sequence is that of CCA-adding enzyme from Saccharolobus islandicus (strain Y.G.57.14 / Yellowstone #1) (Sulfolobus islandicus).